The following is a 460-amino-acid chain: tRNA(Ile)-lysidine synthase (460 aa).

30-35 (SGGLDS) contacts ATP.

This sequence belongs to the tRNA(Ile)-lysidine synthase family.

The protein localises to the cytoplasm. It catalyses the reaction cytidine(34) in tRNA(Ile2) + L-lysine + ATP = lysidine(34) in tRNA(Ile2) + AMP + diphosphate + H(+). In terms of biological role, ligates lysine onto the cytidine present at position 34 of the AUA codon-specific tRNA(Ile) that contains the anticodon CAU, in an ATP-dependent manner. Cytidine is converted to lysidine, thus changing the amino acid specificity of the tRNA from methionine to isoleucine. This is tRNA(Ile)-lysidine synthase from Yersinia pseudotuberculosis serotype I (strain IP32953).